The primary structure comprises 69 residues: DNA-directed RNA polymerase subunit epsilon (69 aa).

Belongs to the RNA polymerase subunit epsilon family. As to quaternary structure, RNAP is composed of a core of 2 alpha, a beta and a beta' subunit. The core is associated with a delta subunit, and at least one of epsilon or omega. When a sigma factor is associated with the core the holoenzyme is formed, which can initiate transcription.

The catalysed reaction is RNA(n) + a ribonucleoside 5'-triphosphate = RNA(n+1) + diphosphate. Its function is as follows. A non-essential component of RNA polymerase (RNAP). The protein is DNA-directed RNA polymerase subunit epsilon of Listeria monocytogenes serotype 4b (strain CLIP80459).